The following is a 133-amino-acid chain: 6,7-dimethyl-8-ribityllumazine synthase (133 aa).

Residues phenylalanine 11, 43 to 45 (AYD), and 67 to 69 (AIV) each bind 5-amino-6-(D-ribitylamino)uracil. 72–73 (DT) contributes to the (2S)-2-hydroxy-3-oxobutyl phosphate binding site. The active-site Proton donor is the histidine 75. 5-amino-6-(D-ribitylamino)uracil is bound at residue phenylalanine 100. Residue arginine 115 participates in (2S)-2-hydroxy-3-oxobutyl phosphate binding.

Belongs to the DMRL synthase family.

The catalysed reaction is (2S)-2-hydroxy-3-oxobutyl phosphate + 5-amino-6-(D-ribitylamino)uracil = 6,7-dimethyl-8-(1-D-ribityl)lumazine + phosphate + 2 H2O + H(+). The protein operates within cofactor biosynthesis; riboflavin biosynthesis; riboflavin from 2-hydroxy-3-oxobutyl phosphate and 5-amino-6-(D-ribitylamino)uracil: step 1/2. In terms of biological role, catalyzes the formation of 6,7-dimethyl-8-ribityllumazine by condensation of 5-amino-6-(D-ribitylamino)uracil with 3,4-dihydroxy-2-butanone 4-phosphate. This is the penultimate step in the biosynthesis of riboflavin. The chain is 6,7-dimethyl-8-ribityllumazine synthase from Halobacterium salinarum (strain ATCC 29341 / DSM 671 / R1).